An 870-amino-acid chain; its full sequence is H(+)/Cl(-) exchange transporter 6 (870 aa).

Over 1-80 the chain is Cytoplasmic; it reads MAGCRGSVCC…KKGRRYEAVK (80 aa). The next 2 membrane-spanning stretches (helical) occupy residues 81-113 and 128-150; these read WMVVFAIGVCTGLVGLFVDFSVRLFTQLKFGVV and LSLLELLGFNLTFVFLASLLVLI. A Selectivity filter part_1 motif is present at residues 156–160; sequence GSGIP. Residue Ser157 participates in chloride binding. The helical intramembrane region spans 159-166; it reads IPEIKCYL. 2 helical membrane passes run 176–194 and 200–217; these read RLRTLLCKVFGVLFSVSGG and EGPMIHSGAVVGAGLPQF. Residues 198 to 202 carry the Selectivity filter part_2 motif; sequence GKEGP. 2 intramembrane regions (helical) span residues 241–253 and 257–265; these read FVSAGAAAGVAAA and PIGGTLFSL. 3 helical membrane passes run 277–294, 335–364, and 371–392; these read TWKVLFCSMSATFTLNFF, GFFVVMGVIGGLLGATFNCLNKRLAKYRMR, and KLVRVLESLLVSLVTTVVVFVA. Residues Asn410, Asn423, and Asn433 are each glycosylated (N-linked (GlcNAc...) asparagine). A run of 2 helical transmembrane segments spans residues 463 to 482 and 488 to 512; these read PVTLALFFILYFLLACWTFG and GLFVPSLLCGAAFGRLVANVLKSYI. Residues 488 to 492 carry the Selectivity filter part_3 motif; the sequence is GLFVP. Position 490 (Phe490) interacts with chloride. The helical intramembrane region spans 520–534; that stretch reads GTFALIGAAAFLGGV. The segment at residues 535-537 is an intramembrane region (note=Loop between two helices); that stretch reads VRM. An intramembrane region (helical) is located at residues 538-549; that stretch reads TISLTVILIEST. Residues 550–553 constitute an intramembrane region (note=Loop between two helices); that stretch reads NEIT. The chain crosses the membrane as a helical span at residues 554–572; sequence YGLPIMVTLMVAKWTGDLF. The Cytoplasmic portion of the chain corresponds to 573–870; that stretch reads NKGIYDVHIG…ARLRQHYQTL (298 aa). Tyr577 provides a ligand contact to chloride. Residues 606–663 form the CBS 1 domain; it reads MEPNLTYVYPHTRIQSLVSILRTTVHHAFPVVTENRGNEKEFMKGNQLISNNIKFKKS. 631–633 contacts ATP; it reads HHA. Phosphoserine is present on Ser774. The CBS 2 domain occupies 808–869; sequence MNPSPFTVSP…QARLRQHYQT (62 aa). 850–853 serves as a coordination point for ATP; that stretch reads TRHN.

It belongs to the chloride channel (TC 2.A.49) family. ClC-6/CLCN6 subfamily. In terms of processing, N-glycosylated on several asparagine residues. In terms of tissue distribution, detected in whole brain and in hippocampus neurons (at protein level). Detected in brain, trigeminus, dorsal root ganglion, spinal cord, eye, kidney, testis, skeletal muscle, thymus and pancreas. Isoform ClC-6c is expressed only in kidney.

The protein localises to the late endosome membrane. The catalysed reaction is 2 chloride(in) + H(+)(out) = 2 chloride(out) + H(+)(in). In terms of biological role, voltage-gated channel mediating the exchange of chloride ions against protons. Functions as antiporter and contributes to the acidification of the late endosome lumen. The CLC channel family contains both chloride channels and proton-coupled anion transporters that exchange chloride or another anion for protons. The presence of conserved gating glutamate residues is typical for family members that function as antiporters. The sequence is that of H(+)/Cl(-) exchange transporter 6 from Mus musculus (Mouse).